A 182-amino-acid polypeptide reads, in one-letter code: Putative manganese efflux pump MntP (182 aa).

6 helical membrane-spanning segments follow: residues 6 to 26 (LIPL…VSLG), 37 to 57 (ILYI…IGMV), 72 to 92 (FAGA…SILE), 101 to 121 (IGIS…SVGL), 131 to 151 (IITI…GLLL), and 162 to 182 (YGEI…LFPI).

Belongs to the MntP (TC 9.B.29) family.

Its subcellular location is the cell membrane. Probably functions as a manganese efflux pump. The chain is Putative manganese efflux pump MntP from Bacillus mycoides (strain KBAB4) (Bacillus weihenstephanensis).